The chain runs to 178 residues: Dual-action ribosomal maturation protein DarP (178 aa).

It belongs to the DarP family.

The protein localises to the cytoplasm. Member of a network of 50S ribosomal subunit biogenesis factors which assembles along the 30S-50S interface, preventing incorrect 23S rRNA structures from forming. Promotes peptidyl transferase center (PTC) maturation. The protein is Dual-action ribosomal maturation protein DarP of Haemophilus influenzae (strain PittEE).